The following is a 273-amino-acid chain: HTH-type transcriptional activator RhaS (273 aa).

Residues 174–272 (YQLLDWLQNN…SQSPRDLRSQ (99 aa)) enclose the HTH araC/xylS-type domain. DNA-binding regions (H-T-H motif) lie at residues 191–212 (PELA…KNKT) and 239–262 (VTDI…KREF).

Binds DNA as a dimer.

It localises to the cytoplasm. Activates expression of the rhaBAD and rhaT operons. In Yersinia pseudotuberculosis serotype O:1b (strain IP 31758), this protein is HTH-type transcriptional activator RhaS.